Reading from the N-terminus, the 357-residue chain is Carbamoyl phosphate synthase small chain (357 aa).

The segment at 1-168 (MSKRLLILED…STATAYPSPN (168 aa)) is CPSase. The L-glutamine site is built by serine 46, glycine 220, and glycine 222. In terms of domain architecture, Glutamine amidotransferase type-1 spans 172-357 (KVVVVDFGLK…FMDLMDNFKK (186 aa)). Catalysis depends on cysteine 247, which acts as the Nucleophile. L-glutamine is bound by residues leucine 248, glutamine 251, asparagine 289, glycine 291, and tyrosine 292. Residues histidine 331 and aspartate 333 contribute to the active site.

Belongs to the CarA family. In terms of assembly, composed of two chains; the small (or glutamine) chain promotes the hydrolysis of glutamine to ammonia, which is used by the large (or ammonia) chain to synthesize carbamoyl phosphate. Tetramer of heterodimers (alpha,beta)4.

The catalysed reaction is hydrogencarbonate + L-glutamine + 2 ATP + H2O = carbamoyl phosphate + L-glutamate + 2 ADP + phosphate + 2 H(+). It catalyses the reaction L-glutamine + H2O = L-glutamate + NH4(+). The protein operates within amino-acid biosynthesis; L-arginine biosynthesis; carbamoyl phosphate from bicarbonate: step 1/1. It participates in pyrimidine metabolism; UMP biosynthesis via de novo pathway; (S)-dihydroorotate from bicarbonate: step 1/3. Its function is as follows. Small subunit of the glutamine-dependent carbamoyl phosphate synthetase (CPSase). CPSase catalyzes the formation of carbamoyl phosphate from the ammonia moiety of glutamine, carbonate, and phosphate donated by ATP, constituting the first step of 2 biosynthetic pathways, one leading to arginine and/or urea and the other to pyrimidine nucleotides. The small subunit (glutamine amidotransferase) binds and cleaves glutamine to supply the large subunit with the substrate ammonia. The chain is Carbamoyl phosphate synthase small chain from Lactococcus lactis subsp. cremoris (strain MG1363).